We begin with the raw amino-acid sequence, 1097 residues long: U3 small nucleolar RNA-associated protein 22 (1097 aa).

Composition is skewed to basic and acidic residues over residues 1–10 (MNGLKREHES) and 18–27 (KTPETEYDSH). The interval 1 to 27 (MNGLKREHESSSSQDGSKTPETEYDSH) is disordered.

Belongs to the NRAP family. In terms of assembly, component of the ribosomal small subunit (SSU) processome.

The protein resides in the nucleus. It is found in the nucleolus. Its function is as follows. Involved in nucleolar processing of pre-18S ribosomal RNA and ribosome assembly. This Schizosaccharomyces pombe (strain 972 / ATCC 24843) (Fission yeast) protein is U3 small nucleolar RNA-associated protein 22.